Consider the following 509-residue polypeptide: Monocarboxylate transporter 9 (509 aa).

The Cytoplasmic segment spans residues 1-12 (MELKKSPDGGWG). The next 12 membrane-spanning stretches (helical) occupy residues 13–33 (WVIVFVSFFTQFLCYGSPLAV), 53–73 (WVGSLASGVGLLASPVCSLCV), 80–100 (PVTIFSGFMVAGGLMLSSFAP), 102–122 (IYFLFFSYGIVVGLGCGLLYT), 137–157 (GLALGLISTGSSVGLFIYAAL), 164–184 (FYGLDGCLLIVGALALNILAC), 305–325 (VFSALFIAILLFDIGGFPPSL), 342–362 (IMPLISIIGIMTAVGKLLLGI), 372–392 (LYLYVATLIIMGLALCAIPFA), 398–418 (LALLSGILGFLTGNWSIFPYV), 433–453 (GILMFFAGLGNSLGPPIVGWF), and 462–482 (IAFYFSGFCVLLGGFILLLAA). The Cytoplasmic portion of the chain corresponds to 483 to 509 (LPSWDTCNKQLPKPAPTTFLYKVASNV).

The protein belongs to the major facilitator superfamily. Monocarboxylate porter (TC 2.A.1.13) family.

It localises to the cell membrane. The enzyme catalyses creatine(in) = creatine(out). The catalysed reaction is (R)-carnitine(in) = (R)-carnitine(out). In terms of biological role, extracellular pH-and Na(+)-sensitive low-affinity creatine transporter. Also functions as a pH-independent carnitine efflux transporter. This Pongo abelii (Sumatran orangutan) protein is Monocarboxylate transporter 9 (SLC16A9).